Here is a 251-residue protein sequence, read N- to C-terminus: uncharacterized protein (251 aa).

14–37 (VLGGTSAIGLATARRLIARGARLV) contributes to the NADP(+) binding site. Substrate is bound at residue S145. Y158 (proton acceptor) is an active-site residue.

The protein belongs to the short-chain dehydrogenases/reductases (SDR) family.

May be involved in the biosynthesis of a heptaene-type antibiotic. This is an uncharacterized protein from Streptomyces coelicolor.